The sequence spans 121 residues: Large ribosomal subunit protein bL20 (121 aa).

This sequence belongs to the bacterial ribosomal protein bL20 family.

Its function is as follows. Binds directly to 23S ribosomal RNA and is necessary for the in vitro assembly process of the 50S ribosomal subunit. It is not involved in the protein synthesizing functions of that subunit. This is Large ribosomal subunit protein bL20 from Polynucleobacter necessarius subsp. necessarius (strain STIR1).